The chain runs to 334 residues: Methionyl-tRNA formyltransferase (334 aa).

111 to 114 (SILP) contacts (6S)-5,6,7,8-tetrahydrofolate.

The protein belongs to the Fmt family.

The enzyme catalyses L-methionyl-tRNA(fMet) + (6R)-10-formyltetrahydrofolate = N-formyl-L-methionyl-tRNA(fMet) + (6S)-5,6,7,8-tetrahydrofolate + H(+). Attaches a formyl group to the free amino group of methionyl-tRNA(fMet). The formyl group appears to play a dual role in the initiator identity of N-formylmethionyl-tRNA by promoting its recognition by IF2 and preventing the misappropriation of this tRNA by the elongation apparatus. This is Methionyl-tRNA formyltransferase from Trichormus variabilis (strain ATCC 29413 / PCC 7937) (Anabaena variabilis).